Here is a 774-residue protein sequence, read N- to C-terminus: Beta-xylosidase/alpha-L-arabinofuranosidase 1 (774 aa).

Positions alanine 1 to glycine 33 are cleaved as a signal peptide. 2 N-linked (GlcNAc...) asparagine glycosylation sites follow: asparagine 48 and asparagine 136. The active site involves aspartate 303. N-linked (GlcNAc...) asparagine glycans are attached at residues asparagine 437 and asparagine 530.

The protein belongs to the glycoside hydrolase 3 family. In terms of processing, proteolytically cleaved in roots to form a 65 kDa protein.

It is found in the secreted. It localises to the extracellular space. The protein localises to the extracellular matrix. The enzyme catalyses Hydrolysis of (1-&gt;4)-beta-D-xylans, to remove successive D-xylose residues from the non-reducing termini.. The catalysed reaction is Hydrolysis of terminal non-reducing alpha-L-arabinofuranoside residues in alpha-L-arabinosides.. Its function is as follows. A bifunctional beta-xylosidase/alpha-L-arabinosidase, exo-enzyme that acts synergistically with endohydrolases. Releases xylose and arabinose from cell walls. Does not cleave xylan from oat spelts although xylan from oat spelts was degraded to xylose when this enzyme was used in combination with xylanase. Also releases xylose and arabinose from aryl glycosides, xylo-oligosaccharides, arabinan from sugar beet and arabino-oligosaccharides, arabinan from sugar beet and arabinoxylan from wheat. The sequence is that of Beta-xylosidase/alpha-L-arabinofuranosidase 1 from Medicago sativa subsp. varia (Alfalfa).